The chain runs to 253 residues: Succinate dehydrogenase [ubiquinone] iron-sulfur subunit, mitochondrial (253 aa).

Residues 23–114 form the 2Fe-2S ferredoxin-type domain; the sequence is FKIYRWNPDK…TTKIYPLPHM (92 aa). [2Fe-2S] cluster-binding residues include cysteine 74, cysteine 79, cysteine 82, and cysteine 94. Positions 156 to 186 constitute a 4Fe-4S ferredoxin-type domain; sequence DRKKLDGLYECILCACCSTSCPSYWWNQEEY. Positions 166, 169, and 172 each coordinate [4Fe-4S] cluster. Position 176 (cysteine 176) interacts with [3Fe-4S] cluster. Position 181 (tryptophan 181) interacts with a ubiquinone. Positions 223 and 229 each coordinate [3Fe-4S] cluster. Position 233 (cysteine 233) interacts with [4Fe-4S] cluster.

Belongs to the succinate dehydrogenase/fumarate reductase iron-sulfur protein family. As to quaternary structure, component of complex II composed of four subunits: a flavoprotein (FP), an iron-sulfur protein (IP), and a cytochrome b composed of a large and a small subunit. [2Fe-2S] cluster is required as a cofactor. [3Fe-4S] cluster serves as cofactor. It depends on [4Fe-4S] cluster as a cofactor.

The protein resides in the mitochondrion inner membrane. The enzyme catalyses a quinone + succinate = fumarate + a quinol. It participates in carbohydrate metabolism; tricarboxylic acid cycle; fumarate from succinate (eukaryal route): step 1/1. Its function is as follows. Iron-sulfur protein (IP) subunit of succinate dehydrogenase (SDH) that is involved in complex II of the mitochondrial electron transport chain and is responsible for transferring electrons from succinate to ubiquinone (coenzyme Q). This chain is Succinate dehydrogenase [ubiquinone] iron-sulfur subunit, mitochondrial (SDH2), found in Candida glabrata (strain ATCC 2001 / BCRC 20586 / JCM 3761 / NBRC 0622 / NRRL Y-65 / CBS 138) (Yeast).